A 133-amino-acid chain; its full sequence is MEEDQELERKMSGVKTSMAEGERKTALEMVQAAGTDRHCVTFVLHEEDHTLGNSLRYMIMKNPEVEFCGYTTTHPSESKINLRIQTRGALPAVEPFQRGLTDLMNVCQHVLDKFEASIKEYKDQKASRNEATF.

An N-acetylmethionine modification is found at Met-1. A disordered region spans residues 1–22 (MEEDQELERKMSGVKTSMAEGE).

Belongs to the archaeal Rpo11/eukaryotic RPB11/RPC19 RNA polymerase subunit family. Component of the RNA polymerase I and RNA polymerase III complexes consisting of at least 13 and 17 subunits, respectively. The transcriptionally active RNA polymerase III complex consists of a ten-subunit horseshoe-shaped catalytic core composed of POLR3A/RPC1, POLR3B/RPC2, POLR1C/RPAC1, POLR1D/RPAC2, POLR3K/RPC10, POLR2E/RPABC1, POLR2F/RPABC2, POLR2H/RPABC3, POLR2K/RPABC4 and POLR2L/RPABC5; a mobile stalk composed of two subunits POLR3H/RPC8 and CRCP/RPC9, protruding from the core and functioning primarily in transcription initiation; and additional subunits homologous to general transcription factors of the RNA polymerase II machinery, POLR3C/RPC3-POLR3F/RPC6-POLR3G/RPC7 heterotrimer required for transcription initiation and POLR3D/RPC4-POLR3E/RPC5 heterodimer involved in both transcription initiation and termination.

The protein localises to the nucleus. DNA-dependent RNA polymerase catalyzes the transcription of DNA into RNA using the four ribonucleoside triphosphates as substrates. Common component of RNA polymerases I and III which synthesize ribosomal RNA precursor pre-rRNA and short non-coding RNAs including 5S rRNA, snRNAs, tRNAs and miRNAs, respectively. This is DNA-directed RNA polymerases I and III subunit RPAC2 (POLR1D) from Bos taurus (Bovine).